The following is a 60-amino-acid chain: Large ribosomal subunit protein bL32 (60 aa).

Over residues 1-16 (MAVPRNRHSNARKNIR) the composition is skewed to basic residues. Positions 1–20 (MAVPRNRHSNARKNIRRSHD) are disordered.

Belongs to the bacterial ribosomal protein bL32 family.

The chain is Large ribosomal subunit protein bL32 (rpmF) from Chlamydia pneumoniae (Chlamydophila pneumoniae).